Here is a 244-residue protein sequence, read N- to C-terminus: Carboxy-S-adenosyl-L-methionine synthase (244 aa).

Residues Tyr-40, 65–67 (GCS), 90–91 (DN), 119–120 (DL), Asn-134, and Arg-201 each bind S-adenosyl-L-methionine.

Belongs to the class I-like SAM-binding methyltransferase superfamily. Cx-SAM synthase family. As to quaternary structure, homodimer.

The enzyme catalyses prephenate + S-adenosyl-L-methionine = carboxy-S-adenosyl-L-methionine + 3-phenylpyruvate + H2O. Functionally, catalyzes the conversion of S-adenosyl-L-methionine (SAM) to carboxy-S-adenosyl-L-methionine (Cx-SAM). This chain is Carboxy-S-adenosyl-L-methionine synthase, found in Trichlorobacter lovleyi (strain ATCC BAA-1151 / DSM 17278 / SZ) (Geobacter lovleyi).